The following is a 483-amino-acid chain: Protein nucleotidyltransferase YdiU (483 aa).

Residues G87, G89, R90, K110, D122, G123, R173, and R180 each contribute to the ATP site. D249 (proton acceptor) is an active-site residue. Mg(2+) contacts are provided by N250 and D259. Residue D259 participates in ATP binding.

Belongs to the SELO family. Mg(2+) is required as a cofactor. Requires Mn(2+) as cofactor.

It carries out the reaction L-seryl-[protein] + ATP = 3-O-(5'-adenylyl)-L-seryl-[protein] + diphosphate. The enzyme catalyses L-threonyl-[protein] + ATP = 3-O-(5'-adenylyl)-L-threonyl-[protein] + diphosphate. It catalyses the reaction L-tyrosyl-[protein] + ATP = O-(5'-adenylyl)-L-tyrosyl-[protein] + diphosphate. The catalysed reaction is L-histidyl-[protein] + UTP = N(tele)-(5'-uridylyl)-L-histidyl-[protein] + diphosphate. It carries out the reaction L-seryl-[protein] + UTP = O-(5'-uridylyl)-L-seryl-[protein] + diphosphate. The enzyme catalyses L-tyrosyl-[protein] + UTP = O-(5'-uridylyl)-L-tyrosyl-[protein] + diphosphate. In terms of biological role, nucleotidyltransferase involved in the post-translational modification of proteins. It can catalyze the addition of adenosine monophosphate (AMP) or uridine monophosphate (UMP) to a protein, resulting in modifications known as AMPylation and UMPylation. The polypeptide is Protein nucleotidyltransferase YdiU (Pectobacterium carotovorum subsp. carotovorum (strain PC1)).